We begin with the raw amino-acid sequence, 188 residues long: Elongation factor P (188 aa).

It belongs to the elongation factor P family.

It localises to the cytoplasm. Its pathway is protein biosynthesis; polypeptide chain elongation. Its function is as follows. Involved in peptide bond synthesis. Stimulates efficient translation and peptide-bond synthesis on native or reconstituted 70S ribosomes in vitro. Probably functions indirectly by altering the affinity of the ribosome for aminoacyl-tRNA, thus increasing their reactivity as acceptors for peptidyl transferase. This is Elongation factor P from Christiangramia forsetii (strain DSM 17595 / CGMCC 1.15422 / KT0803) (Gramella forsetii).